Consider the following 560-residue polypeptide: Membrane protein insertase YidC (560 aa).

The chain crosses the membrane as a helical span at residues 1-21 (MDIKRTILIAALAVVSYVMVL). A disordered region spans residues 42–66 (VAPGLPDGVPAGNNGASADVPSANA). The next 5 membrane-spanning stretches (helical) occupy residues 341–361 (LELTVDYGFLWFIAQPIFWLL), 367–387 (LLGNWGWSIIVLTMLIKGLFF), 437–457 (LGGCLPILVQMPVFLALYWVL), 468–488 (WILWITDLSIKDPFFILPIIM), and 515–535 (PIIFTFFFLWFPAGLVLYWVV).

This sequence belongs to the OXA1/ALB3/YidC family. Type 1 subfamily. Interacts with the Sec translocase complex via SecD. Specifically interacts with transmembrane segments of nascent integral membrane proteins during membrane integration.

Its subcellular location is the cell inner membrane. In terms of biological role, required for the insertion and/or proper folding and/or complex formation of integral membrane proteins into the membrane. Involved in integration of membrane proteins that insert both dependently and independently of the Sec translocase complex, as well as at least some lipoproteins. Aids folding of multispanning membrane proteins. This Pseudomonas putida (strain ATCC 700007 / DSM 6899 / JCM 31910 / BCRC 17059 / LMG 24140 / F1) protein is Membrane protein insertase YidC.